The chain runs to 284 residues: Tropomyosin-1 (284 aa).

Positions 1-284 (MDGIKKKMIA…DQTFAELTGY (284 aa)) form a coiled coil. Residues 111 to 131 (TKLEEASKTAEESERGRKDLE) form a disordered region.

The protein belongs to the tropomyosin family. As to quaternary structure, homodimer.

Its function is as follows. Tropomyosin, in association with the troponin complex, plays a central role in the calcium dependent regulation of muscle contraction. This is Tropomyosin-1 from Schistosoma mansoni (Blood fluke).